Here is a 222-residue protein sequence, read N- to C-terminus: 4'-phosphopantetheinyl transferase Npt (222 aa).

The Mg(2+) site is built by Asp-105, Glu-107, and Glu-147.

The protein belongs to the P-Pant transferase superfamily. As to quaternary structure, monomer. Mg(2+) serves as cofactor.

It carries out the reaction apo-[ACP] + CoA = holo-[ACP] + adenosine 3',5'-bisphosphate + H(+). Its function is as follows. Catalyzes the transfer of the 4'-phosphopantetheine moiety from coenzyme A to a serine residue in the acyl-carrier domain of carboxylic acid reductase Car, thus converting apo-Car to fully active holo-Car. Is probably also responsible for the activation of other proteins with phosphopantetheine attachment sites. In Nocardia iowensis, this protein is 4'-phosphopantetheinyl transferase Npt (npt).